The sequence spans 281 residues: MESKQPEDIHQDCELKQDELISKLQHSQQNFDNIKKILANFEKENENLADENEILKTRIASLEKDVKQEKNATKMAKSLNEETINELTLSEDLIESLKKQFQASKIELKEEILSKNKVEKDYSNDKRYFLEREQYLLITMESMESGKLEHEQQTEIMNKDVEELKIRVKELEATDLSEKNIELERQVGKLTAQLQDFESSRGYEQELILSQLEVQKRKLDKQLIDLQSKLERNPELVEFDKLHEELQTERMNMPVQVCYVHVSFIHKDIENLIYRKMNNNK.

The sequence is that of Nhr-229 coiled coil domain containing nccd-1 from Caenorhabditis elegans.